Here is a 104-residue protein sequence, read N- to C-terminus: DNA-directed RNA polymerase subunit omega (104 aa).

The disordered stretch occupies residues 60 to 104 (VIHPDPEGKREAVRRRAEEERLRKEEEERKIKEQIAKEKEEGEKI). Residues 63 to 104 (PDPEGKREAVRRRAEEERLRKEEEERKIKEQIAKEKEEGEKI) show a composition bias toward basic and acidic residues.

Belongs to the RNA polymerase subunit omega family. The RNAP catalytic core consists of 2 alpha, 1 beta, 1 beta' and 1 omega subunit. When a sigma factor is associated with the core the holoenzyme is formed, which can initiate transcription.

The enzyme catalyses RNA(n) + a ribonucleoside 5'-triphosphate = RNA(n+1) + diphosphate. In terms of biological role, promotes RNA polymerase assembly. Latches the N- and C-terminal regions of the beta' subunit thereby facilitating its interaction with the beta and alpha subunits. This chain is DNA-directed RNA polymerase subunit omega, found in Streptococcus sanguinis (strain SK36).